The following is a 794-amino-acid chain: Zinc finger protein 148 (794 aa).

Lys-6 participates in a covalent cross-link: Glycyl lysine isopeptide (Lys-Gly) (interchain with G-Cter in SUMO2). At Ser-51 the chain carries Phosphoserine. Residues Lys-88, Lys-115, and Lys-132 each participate in a glycyl lysine isopeptide (Lys-Gly) (interchain with G-Cter in SUMO2) cross-link. The C2H2-type 1 zinc finger occupies 171–193 (HVCEHCNAAFRTNYHLQRHVFIH). Position 194 is a phosphothreonine (Thr-194). C2H2-type zinc fingers lie at residues 199-221 (FQCSQCDMRFIQKYLLQRHEKIH) and 227-249 (FRCDECGMRFIQKYHMERHKRTH). Ser-250 is subject to Phosphoserine. The C2H2-type 4 zinc finger occupies 255-278 (YQCEYCLQYFSRTDRVLKHKRMCH). A Glycyl lysine isopeptide (Lys-Gly) (interchain with G-Cter in SUMO2) cross-link involves residue Lys-291. The disordered stretch occupies residues 298–338 (EEDSGFSTSPKDNSLPKKKRQKTEKKSSGMDKESSLDKSDL). Phosphoserine is present on residues Ser-301 and Ser-306. Residue Lys-308 forms a Glycyl lysine isopeptide (Lys-Gly) (interchain with G-Cter in SUMO2) linkage. Over residues 321–338 (EKKSSGMDKESSLDKSDL) the composition is skewed to basic and acidic residues. Residue Lys-356 forms a Glycyl lysine isopeptide (Lys-Gly) (interchain with G-Cter in SUMO1); alternate linkage. A Glycyl lysine isopeptide (Lys-Gly) (interchain with G-Cter in SUMO2); alternate cross-link involves residue Lys-356. Lys-402 is covalently cross-linked (Glycyl lysine isopeptide (Lys-Gly) (interchain with G-Cter in SUMO2)). Position 412 is a phosphoserine (Ser-412). Residues Lys-421 and Lys-424 each participate in a glycyl lysine isopeptide (Lys-Gly) (interchain with G-Cter in SUMO2) cross-link. Residues 575-588 (SSEVPEVTQSENVG) are compositionally biased toward polar residues. Positions 575–596 (SSEVPEVTQSENVGSSSQASSS) are disordered. An N6-acetyllysine modification is found at Lys-607. Residues Ser-665 and Ser-784 each carry the phosphoserine modification. Residues 775–794 (NDNRAGMTSSPDATTGQTFG) are disordered.

This sequence belongs to the krueppel C2H2-type zinc-finger protein family. Interacts with HNRNPDL. Interacts with the 5FMC complex; the interaction requires association with CHTOP. Interacts with CAVIN1. In terms of processing, sumoylated with SUMO2. Desumoylated by SENP3, resulting in the stimulation of transcription of its target genes.

Its subcellular location is the nucleus. Involved in transcriptional regulation. Represses the transcription of a number of genes including gastrin, stromelysin and enolase. Binds to the G-rich box in the enhancer region of these genes. The protein is Zinc finger protein 148 (ZNF148) of Bos taurus (Bovine).